The chain runs to 152 residues: UPF0266 membrane protein YobD (152 aa).

Helical transmembrane passes span 6–26, 45–65, and 67–87; these read LVLI…QFIM, IDSV…VTNH, and ALIT…IFWI.

The protein belongs to the UPF0266 family.

It is found in the cell inner membrane. This Escherichia coli O157:H7 (strain EC4115 / EHEC) protein is UPF0266 membrane protein YobD.